A 178-amino-acid polypeptide reads, in one-letter code: MSQKIRSTTVIAVRKDGKIVMAGDGQVTMGETVMKGNARKVRKIYDGKIITGFAGATADAFTLLEKFEIRVKEFSGDLTRAAVELAKDWRTDKMLKNLQALLLVADSKTTLLISGNGDVIEPEEDVLAIGSGGNYAYASALALMQNTNLSAREIAEKSLQIAGKICIYTNGKIITEEI.

The active site involves Thr-8. Na(+) is bound by residues Gly-163, Cys-166, and Thr-169.

This sequence belongs to the peptidase T1B family. HslV subfamily. As to quaternary structure, a double ring-shaped homohexamer of HslV is capped on each side by a ring-shaped HslU homohexamer. The assembly of the HslU/HslV complex is dependent on binding of ATP.

It localises to the cytoplasm. The enzyme catalyses ATP-dependent cleavage of peptide bonds with broad specificity.. Its activity is regulated as follows. Allosterically activated by HslU binding. Functionally, protease subunit of a proteasome-like degradation complex believed to be a general protein degrading machinery. This Treponema denticola (strain ATCC 35405 / DSM 14222 / CIP 103919 / JCM 8153 / KCTC 15104) protein is ATP-dependent protease subunit HslV.